The following is a 1342-amino-acid chain: DNA-directed RNA polymerase subunit beta (1342 aa).

The protein belongs to the RNA polymerase beta chain family. As to quaternary structure, the RNAP catalytic core consists of 2 alpha, 1 beta, 1 beta' and 1 omega subunit. When a sigma factor is associated with the core the holoenzyme is formed, which can initiate transcription.

The enzyme catalyses RNA(n) + a ribonucleoside 5'-triphosphate = RNA(n+1) + diphosphate. In terms of biological role, DNA-dependent RNA polymerase catalyzes the transcription of DNA into RNA using the four ribonucleoside triphosphates as substrates. The chain is DNA-directed RNA polymerase subunit beta from Buchnera aphidicola subsp. Acyrthosiphon pisum (strain Tuc7).